We begin with the raw amino-acid sequence, 210 residues long: Somatotropin (210 aa).

Residues 1 to 22 form the signal peptide; that stretch reads MGQVFLLMPVLLVSCFLSQGAA. Histidine 38 contributes to the Zn(2+) binding site. Cysteines 71 and 183 form a disulfide. Glutamate 192 lines the Zn(2+) pocket. A disulfide bridge connects residues cysteine 200 and cysteine 208.

Belongs to the somatotropin/prolactin family.

Its subcellular location is the secreted. In terms of biological role, growth hormone plays an important role in growth control and is involved in the regulation of several anabolic processes. Implicated as an osmoregulatory substance important for seawater adaptation. In Oncorhynchus kisutch (Coho salmon), this protein is Somatotropin (gh).